A 219-amino-acid polypeptide reads, in one-letter code: Chloramphenicol acetyltransferase (219 aa).

The Proton acceptor role is filled by H193.

This sequence belongs to the chloramphenicol acetyltransferase family.

It catalyses the reaction chloramphenicol + acetyl-CoA = chloramphenicol 3-acetate + CoA. This enzyme is an effector of chloramphenicol resistance in bacteria. The polypeptide is Chloramphenicol acetyltransferase (cat) (Acinetobacter calcoaceticus subsp. anitratus).